Consider the following 273-residue polypeptide: MAATVPRFDDVYKNAQRRILDQETFFSRGLSRPLMKNTYLFDNYAYGWIPETAIWSSRYANLDASDYYPISLGLLKKFEFLMSLYKGPIPVYEEKVNTEFIANGSFSGRYVSYLRKFSALPTNEFISFLLLTSIPIYNILFWFKNTQFDITKHTLFRYVYTDNAKHLALARYMHQTGDYKPLFSRLKENYIFTGPVPIGIKDINHPNLSRARSPSDYETLANISTILYFTKYDPVLMFLLFYVPGYSITTKITPAVEYLMDKLNLTKSDVQLL.

2 helical membrane passes run 123-143 (NEFISFLLLTSIPIYNILFWF) and 238-260 (FLLFYVPGYSITTKITPAVEYLM).

Belongs to the orthopoxvirus OPG070 family. In terms of processing, phosphorylated by OPG054/F10L kinase in vitro.

The protein resides in the virion. The protein localises to the host endoplasmic reticulum membrane. It localises to the host cytoplasm. Its function is as follows. May play a role in the biogenesis of the viral factories by recruiting and wrapping DNA replication sites in endoplasmic reticulum derived membranes. Later in infection, phosphorylation by the late viral kinase OPG054/F10L might decrease DNA-binding ability and trigger ER membranes disassembly. Binds DNA in vitro. This Vaccinia virus (strain Western Reserve) (VACV) protein is Protein OPG070 (OPG070).